A 462-amino-acid polypeptide reads, in one-letter code: MESTPSRGLNRVHLQCRNLQEFLGGLSPGVLDRLYGHPATCLAVFRELPSLAKNWVMRMLFLEQPLPQAAVALWVKKEFSKAQEESTGLLSGLRIWHTQLLPGGLQGLILNPIFRQNLRIALLGGGKAWSDDTSQLGPDKHARDVPSLDKYAEERWEVVLHFMVGSPSAAVSQDLAQLLSQAGLMKSTEPGEPPCITSAGFQFLLLDTPAQLWYFMLQYLQTAQSRGMDLVEILSFLFQLSFSTLGKDYSVEGMSDSLLNFLQHLREFGLVFQRKRKSRRYYPTRLAINLSSGVSGAGGTVHQPGFIVVETNYRLYAYTESELQIALIALFSEMLYRFPNMVVAQVTRESVQQAIASGITAQQIIHFLRTRAHPVMLKQTPVLPPTITDQIRLWELERDRLRFTEGVLYNQFLSQVDFELLLAHARELGVLVFENSAKRLMVVTPAGHSDVKRFWKRQKHSS.

Belongs to the TFB2 family. As to quaternary structure, component of the 7-subunit TFIIH core complex composed of XPB/ERCC3, XPD/ERCC2, GTF2H1, GTF2H2, GTF2H3, GTF2H4 and GTF2H5, which is active in NER. The core complex associates with the 3-subunit CDK-activating kinase (CAK) module composed of CCNH/cyclin H, CDK7 and MNAT1 to form the 10-subunit holoenzyme (holo-TFIIH) active in transcription. Part of TBP-based Pol II pre-initiation complex (PIC), in which Pol II core assembles with general transcription factors and other specific initiation factors including GTF2E1, GTF2E2, GTF2F1, GTF2F2, TCEA1, ERCC2, ERCC3, GTF2H2, GTF2H3, GTF2H4, GTF2H5, GTF2A1, GTF2A2, GTF2B and TBP; this large multi-subunit PIC complex mediates DNA unwinding and targets Pol II core to the transcription start site where the first phosphodiester bond forms.

The protein resides in the nucleus. Its function is as follows. Component of the general transcription and DNA repair factor IIH (TFIIH) core complex, which is involved in general and transcription-coupled nucleotide excision repair (NER) of damaged DNA and, when complexed to CAK, in RNA transcription by RNA polymerase II. In NER, TFIIH acts by opening DNA around the lesion to allow the excision of the damaged oligonucleotide and its replacement by a new DNA fragment. In transcription, TFIIH has an essential role in transcription initiation. When the pre-initiation complex (PIC) has been established, TFIIH is required for promoter opening and promoter escape. Phosphorylation of the C-terminal tail (CTD) of the largest subunit of RNA polymerase II by the kinase module CAK controls the initiation of transcription. Stimulates the ATPase activity of TFIIH subunit XPB/ERCC3. In Homo sapiens (Human), this protein is General transcription factor IIH subunit 4 (GTF2H4).